The following is a 1140-amino-acid chain: Eukaryotic translation initiation factor 3 subunit A (1140 aa).

Residues 319 to 502 (LQRMAAHVLL…HCIYFGTDLT (184 aa)) enclose the PCI domain. Basic and acidic residues-rich tracts occupy residues 590 to 624 (NNAREEEEARRQEEESRKAKLAEQKRLEQEQEERE), 826 to 903 (RMAQ…RPEG), 925 to 965 (DRAD…KDNE), 1000 to 1019 (SRDDKWRRGGDRERDRDFRN), 1026 to 1053 (RGGDREDDRDRGGFRRNDGPRRNEEQQR), and 1061 to 1087 (DAPRQSDNRDNRRPAGGDRRDRDRDVR). Disordered regions lie at residues 590–632 (NNAR…QNEI) and 826–1140 (RMAQ…VKRR). The segment covering 1091 to 1101 (PKEGGGGGGGN) has biased composition (gly residues). Positions 1108–1130 (PRDEKPTTKQRDQPQDKENKAGD) are enriched in basic and acidic residues.

It belongs to the eIF-3 subunit A family. In terms of assembly, component of the eukaryotic translation initiation factor 3 (eIF-3) complex. The eIF-3 complex interacts with pix.

The protein localises to the cytoplasm. Its function is as follows. RNA-binding component of the eukaryotic translation initiation factor 3 (eIF-3) complex, which is involved in protein synthesis of a specialized repertoire of mRNAs and, together with other initiation factors, stimulates binding of mRNA and methionyl-tRNAi to the 40S ribosome. The eIF-3 complex specifically targets and initiates translation of a subset of mRNAs involved in cell proliferation. In Drosophila willistoni (Fruit fly), this protein is Eukaryotic translation initiation factor 3 subunit A.